We begin with the raw amino-acid sequence, 466 residues long: DNA polymerase delta subunit 3 (466 aa).

Alanine 2 is subject to N-acetylalanine. 2 disordered regions span residues 145–218 (PAES…KEVM) and 255–466 (EQEV…FQRK). Basic and acidic residues-rich tracts occupy residues 205–218 (DANK…KEVM), 255–265 (EQEVKEEKKVE), and 281–297 (DLKK…MQQK). A Glycyl lysine isopeptide (Lys-Gly) (interchain with G-Cter in SUMO); alternate cross-link involves residue lysine 259. Residue lysine 259 forms a Glycyl lysine isopeptide (Lys-Gly) (interchain with G-Cter in SUMO2); alternate linkage. Lysine 262 participates in a covalent cross-link: Glycyl lysine isopeptide (Lys-Gly) (interchain with G-Cter in SUMO2). Serine 308 carries the phosphoserine modification. Residues 350 to 360 (PSPPPPSPSPE) are compositionally biased toward pro residues. 2 positions are modified to phosphoserine: serine 407 and serine 409. Residue threonine 411 is modified to Phosphothreonine. Serine 413 carries the post-translational modification Phosphoserine. Residues 432 to 441 (VKKEPKEERK) are compositionally biased toward basic and acidic residues. Lysine 433 participates in a covalent cross-link: Glycyl lysine isopeptide (Lys-Gly) (interchain with G-Cter in SUMO); alternate. Lysine 433 is covalently cross-linked (Glycyl lysine isopeptide (Lys-Gly) (interchain with G-Cter in SUMO2); alternate). A PIP-box motif is present at residues 456–463 (QVAITGFF).

As to quaternary structure, component of both the DNA polymerase delta and DNA polymerase zeta complexes. The tetrameric DNA polymerase delta complex (Pol-delta4), which consists of POLD1/p125, POLD2/p50, POLD3/p66/p68 and POLD4/p12, with POLD1 bearing DNA polymerase and 3' to 5' proofreading exonuclease activities. Within this complex, directly interacts with POLD2. Following stress caused by DNA damaging agents or by replication stress, POLD4 is degraded and Pol-delta4 is converted into a trimeric form of the complex (Pol-delta3), which consists of POLD1, POLD2 and POLD3. Pol-delta3 is the major form occurring at S phase replication sites, as well as DNA damage sites. Directly interacts with PCNA, as do POLD1 and POLD4; this interaction stimulates Pol-delta polymerase activity. Component of the DNA polymerase zeta complex (POLZ), which consists of REV3L, MAD2L2, POLD2 and POLD3, with REV3L bearing DNA polymerase catalytic activity. The DNA polymerase delta complex interacts with POLDIP2; this interaction is probably mediated through direct binding to POLD2. In terms of processing, ubiquitinated, but not targeted to the proteasome. Sumoylated. Sumoylation by SUMO3 may be predominant.

It is found in the cytoplasm. It localises to the nucleus. In terms of biological role, accessory component of both the DNA polymerase delta complex and the DNA polymerase zeta complex. As a component of the trimeric and tetrameric DNA polymerase delta complexes (Pol-delta3 and Pol-delta4, respectively), plays a role in high fidelity genome replication, including in lagging strand synthesis, and repair. Required for optimal Pol-delta activity. Stabilizes the Pol-delta complex and plays a major role in Pol-delta stimulation by PCNA. Pol-delta3 and Pol-delta4 are characterized by the absence or the presence of POLD4. They exhibit differences in catalytic activity. Most notably, Pol-delta3 shows higher proofreading activity than Pol-delta4. Although both Pol-delta3 and Pol-delta4 process Okazaki fragments in vitro, Pol-delta3 may also be better suited to fulfill this task, exhibiting near-absence of strand displacement activity compared to Pol-delta4 and stalling on encounter with the 5'-blocking oligonucleotides. Pol-delta3 idling process may avoid the formation of a gap, while maintaining a nick that can be readily ligated. Along with DNA polymerase kappa, DNA polymerase delta carries out approximately half of nucleotide excision repair (NER) synthesis following UV irradiation. In this context, POLD3, along with PCNA and RFC1-replication factor C complex, is required to recruit POLD1, the catalytic subunit of the polymerase delta complex, to DNA damage sites. Under conditions of DNA replication stress, required for the repair of broken replication forks through break-induced replication (BIR). Involved in the translesion synthesis (TLS) of templates carrying O6-methylguanine or abasic sites performed by Pol-delta4, independently of DNA polymerase zeta (REV3L) or eta (POLH). Facilitates abasic site bypass by DNA polymerase delta by promoting extension from the nucleotide inserted opposite the lesion. Also involved in TLS, as a component of the tetrameric DNA polymerase zeta complex. Along with POLD2, dramatically increases the efficiency and processivity of DNA synthesis of the DNA polymerase zeta complex compared to the minimal zeta complex, consisting of only REV3L and REV7. The chain is DNA polymerase delta subunit 3 (POLD3) from Bos taurus (Bovine).